Here is a 296-residue protein sequence, read N- to C-terminus: 2-dehydropantoate 2-reductase (296 aa).

NADP(+) is bound by residues 7-12 (GPGAVG), asparagine 94, and alanine 120. Asparagine 94 is a substrate binding site. Lysine 175 (proton donor) is an active-site residue. The substrate site is built by asparagine 179, asparagine 183, asparagine 193, and serine 245. Position 257 (glutamate 257) interacts with NADP(+).

It belongs to the ketopantoate reductase family.

It localises to the cytoplasm. It carries out the reaction (R)-pantoate + NADP(+) = 2-dehydropantoate + NADPH + H(+). It participates in cofactor biosynthesis; (R)-pantothenate biosynthesis; (R)-pantoate from 3-methyl-2-oxobutanoate: step 2/2. In terms of biological role, catalyzes the NADPH-dependent reduction of ketopantoate into pantoic acid. This chain is 2-dehydropantoate 2-reductase (panE), found in Vibrio cholerae serotype O1 (strain ATCC 39315 / El Tor Inaba N16961).